The sequence spans 140 residues: Vesicle transport protein GOT1 (140 aa).

Transmembrane regions (helical) follow at residues 12 to 32, 35 to 55, 71 to 91, and 96 to 116; these read IGLG…IFVF, GLIA…IGIN, ISFG…GLLL, and FLVL…RIPL.

This sequence belongs to the GOT1 family. In terms of assembly, homodimer. No interactions with STL1, STL2, CESA1, CESA3, CESA4, CESA6, CESA7 or CESA8.

The protein resides in the golgi apparatus membrane. In terms of biological role, may be involved in fusion of ER-derived transport vesicles with the Golgi complex. This Arabidopsis thaliana (Mouse-ear cress) protein is Vesicle transport protein GOT1.